Reading from the N-terminus, the 179-residue chain is Large ribosomal subunit protein uL6 (179 aa).

The span at E154 to R169 shows a compositional bias: basic and acidic residues. The interval E154–K179 is disordered. The span at R170–K179 shows a compositional bias: basic residues.

The protein belongs to the universal ribosomal protein uL6 family. Part of the 50S ribosomal subunit.

Functionally, this protein binds to the 23S rRNA, and is important in its secondary structure. It is located near the subunit interface in the base of the L7/L12 stalk, and near the tRNA binding site of the peptidyltransferase center. This is Large ribosomal subunit protein uL6 from Oleidesulfovibrio alaskensis (strain ATCC BAA-1058 / DSM 17464 / G20) (Desulfovibrio alaskensis).